A 448-amino-acid polypeptide reads, in one-letter code: Tubulin alpha chain, nucleomorph (448 aa).

8 residues coordinate GTP: glutamine 11, glutamate 71, serine 140, glycine 144, threonine 145, threonine 179, asparagine 206, and asparagine 228. Mg(2+) is bound at residue glutamate 71. The active site involves glutamate 254.

The protein belongs to the tubulin family. In terms of assembly, dimer of alpha and beta chains. A typical microtubule is a hollow water-filled tube with an outer diameter of 25 nm and an inner diameter of 15 nM. Alpha-beta heterodimers associate head-to-tail to form protofilaments running lengthwise along the microtubule wall with the beta-tubulin subunit facing the microtubule plus end conferring a structural polarity. Microtubules usually have 13 protofilaments but different protofilament numbers can be found in some organisms and specialized cells. It depends on Mg(2+) as a cofactor.

The enzyme catalyses GTP + H2O = GDP + phosphate + H(+). Tubulin is the major constituent of microtubules, a cylinder consisting of laterally associated linear protofilaments composed of alpha- and beta-tubulin heterodimers. Microtubules grow by the addition of GTP-tubulin dimers to the microtubule end, where a stabilizing cap forms. Below the cap, tubulin dimers are in GDP-bound state, owing to GTPase activity of alpha-tubulin. This chain is Tubulin alpha chain, nucleomorph (tubA), found in Guillardia theta (Cryptophyte).